A 123-amino-acid chain; its full sequence is Small ribosomal subunit protein uS12 (123 aa).

Asp-89 carries the post-translational modification 3-methylthioaspartic acid.

Belongs to the universal ribosomal protein uS12 family. Part of the 30S ribosomal subunit. Contacts proteins S8 and S17. May interact with IF1 in the 30S initiation complex.

With S4 and S5 plays an important role in translational accuracy. Its function is as follows. Interacts with and stabilizes bases of the 16S rRNA that are involved in tRNA selection in the A site and with the mRNA backbone. Located at the interface of the 30S and 50S subunits, it traverses the body of the 30S subunit contacting proteins on the other side and probably holding the rRNA structure together. The combined cluster of proteins S8, S12 and S17 appears to hold together the shoulder and platform of the 30S subunit. In Methylobacterium sp. (strain 4-46), this protein is Small ribosomal subunit protein uS12.